A 69-amino-acid polypeptide reads, in one-letter code: Light-harvesting protein B-1015 beta chain (69 aa).

The Cytoplasmic portion of the chain corresponds to 2–21 (ADLKPSLTGLTEEEAKEFHG). Residues histidine 20 and histidine 38 each coordinate a bacteriochlorophyll. Residues 22 to 44 (IFVTSTVLYLATAVIVHYLVWTA) form a helical membrane-spanning segment. Over 45–56 (RPWIAPIPKGWV) the chain is Periplasmic. The propeptide occupies 57–69 (NLEGVQSALSYLV).

It belongs to the antenna complex beta subunit family. In terms of assembly, the core complex is formed by different alpha and beta chains, binding bacteriochlorophyll molecules, and arranged most probably in tetrameric structures disposed around the reaction center. The non-pigmented gamma chains may constitute additional components.

The protein localises to the cell inner membrane. Antenna complexes are light-harvesting systems, which transfer the excitation energy to the reaction centers. The sequence is that of Light-harvesting protein B-1015 beta chain (pufB) from Blastochloris viridis (Rhodopseudomonas viridis).